Consider the following 120-residue polypeptide: NAD(P)H-quinone oxidoreductase subunit 3, chloroplastic (120 aa).

3 helical membrane-spanning segments follow: residues 9 to 29 (IFWA…FISG), 64 to 84 (MFAL…PWAM), and 88 to 108 (VLGV…ILGL).

This sequence belongs to the complex I subunit 3 family. As to quaternary structure, NDH is composed of at least 16 different subunits, 5 of which are encoded in the nucleus.

Its subcellular location is the plastid. It is found in the chloroplast thylakoid membrane. It carries out the reaction a plastoquinone + NADH + (n+1) H(+)(in) = a plastoquinol + NAD(+) + n H(+)(out). It catalyses the reaction a plastoquinone + NADPH + (n+1) H(+)(in) = a plastoquinol + NADP(+) + n H(+)(out). NDH shuttles electrons from NAD(P)H:plastoquinone, via FMN and iron-sulfur (Fe-S) centers, to quinones in the photosynthetic chain and possibly in a chloroplast respiratory chain. The immediate electron acceptor for the enzyme in this species is believed to be plastoquinone. Couples the redox reaction to proton translocation, and thus conserves the redox energy in a proton gradient. The polypeptide is NAD(P)H-quinone oxidoreductase subunit 3, chloroplastic (Barbarea verna (Land cress)).